Here is a 280-residue protein sequence, read N- to C-terminus: tRNA (guanine-N(1)-)-methyltransferase (280 aa).

Residues Asp-71–Arg-94 form a disordered region. A compositionally biased stretch (polar residues) spans Ser-74–Gln-84. S-adenosyl-L-methionine-binding positions include Gly-146 and Ile-170–Leu-175.

This sequence belongs to the RNA methyltransferase TrmD family. In terms of assembly, homodimer.

It is found in the cytoplasm. It catalyses the reaction guanosine(37) in tRNA + S-adenosyl-L-methionine = N(1)-methylguanosine(37) in tRNA + S-adenosyl-L-homocysteine + H(+). Specifically methylates guanosine-37 in various tRNAs. This chain is tRNA (guanine-N(1)-)-methyltransferase, found in Corynebacterium aurimucosum (strain ATCC 700975 / DSM 44827 / CIP 107346 / CN-1) (Corynebacterium nigricans).